The chain runs to 409 residues: uncharacterized protein (409 aa).

The first 26 residues, 1-26, serve as a signal peptide directing secretion; it reads MKKELLASLVLCLSLSPLVSTNEVFA.

This is an uncharacterized protein from Bacillus subtilis (strain 168).